A 415-amino-acid chain; its full sequence is Carboxypeptidase B (415 aa).

Positions 1–13 (MLLLLALVSVALA) are cleaved as a signal peptide. Positions 14–108 (HASEEHFDGN…LESQFDSHTR (95 aa)) are cleaved as a propeptide — activation peptide. The Peptidase M14 domain maps to 116-410 (KYNKWETIEA…LAVKYIANYV (295 aa)). An intrachain disulfide couples Cys-171 to Cys-184. Positions 174 and 177 each coordinate Zn(2+). Substrate contacts are provided by residues 174–177 (HARE), Arg-232, and 249–250 (NR). 2 cysteine pairs are disulfide-bonded: Cys-243-Cys-266 and Cys-257-Cys-271. His-302 is a binding site for Zn(2+). Substrate-binding positions include 303–304 (SY) and Tyr-354. Glu-376 serves as the catalytic Proton donor/acceptor.

This sequence belongs to the peptidase M14 family. The cofactor is Zn(2+).

The protein resides in the secreted. It localises to the zymogen granule lumen. It carries out the reaction Preferential release of a C-terminal lysine or arginine amino acid.. In Rattus norvegicus (Rat), this protein is Carboxypeptidase B (Cpb1).